The sequence spans 523 residues: FAD:protein FMN transferase (523 aa).

3 consecutive transmembrane segments (helical) span residues 88 to 108 (LLAG…VALA), 118 to 138 (GGAA…LVLL), and 169 to 189 (GLAL…TAPA). FAD-binding positions include 277–279 (LFD) and D336. A339 contacts Mg(2+). Residues K342 and 423 to 425 (HII) contribute to the FAD site. Residues D450 and T454 each contribute to the Mg(2+) site.

This sequence in the N-terminal section; belongs to the RseC family. It in the C-terminal section; belongs to the ApbE family. The cofactor is Mg(2+).

It is found in the cell membrane. It carries out the reaction L-threonyl-[protein] + FAD = FMN-L-threonyl-[protein] + AMP + H(+). Functionally, flavin transferase that catalyzes the transfer of the FMN moiety of FAD and its covalent binding to the hydroxyl group of a threonine residue in a target flavoprotein. Is likely involved in the modification of RnfG and RnfD. Required for nitrogen fixation. This is FAD:protein FMN transferase from Rhodobacter capsulatus (Rhodopseudomonas capsulata).